The primary structure comprises 401 residues: Acetate kinase (401 aa).

N7 provides a ligand contact to Mg(2+). K14 contacts ATP. R96 contacts substrate. The active-site Proton donor/acceptor is D153. ATP contacts are provided by residues 212–216 (HLGNG), 287–289 (DMR), and 335–339 (GIGEN). E388 serves as a coordination point for Mg(2+).

It belongs to the acetokinase family. As to quaternary structure, homodimer. Mg(2+) serves as cofactor. It depends on Mn(2+) as a cofactor.

The protein resides in the cytoplasm. It carries out the reaction acetate + ATP = acetyl phosphate + ADP. It functions in the pathway metabolic intermediate biosynthesis; acetyl-CoA biosynthesis; acetyl-CoA from acetate: step 1/2. Catalyzes the formation of acetyl phosphate from acetate and ATP. Can also catalyze the reverse reaction. This Microcystis aeruginosa (strain NIES-843 / IAM M-2473) protein is Acetate kinase.